The primary structure comprises 352 residues: MSASTTATTRHDWSLAEVKALFQLPFNDLLFQAQTVHRAHFDPNRVQVSTLLSIKTGACPEDCKYCPQSGHYNTGLEKQKLMEVQKVLEEAARAKAIGSTRFCMGAAWKHPSAKDMPYVLEMVKGVKAMGLETCMTLGKLDQDQTQALAQAGLDYYNHNLDTSPEFYGSIITTRTYSERLQTLAYVRDAGMKICSGGILGMGESLDDRAGLLIQLANLPEHPESVPINMLVKVAGTPLAEEEDVDPFDFIRMLAVARLLMPKSHVRLSAGREQMNEQMQALAFMAGANSIFYGEKLLTTANPQADKDMQLFARLGIKPEAREEHADEVHQAAIEQALVEQRSSELFYNAASA.

One can recognise a Radical SAM core domain in the interval 44–262 (NRVQVSTLLS…LAVARLLMPK (219 aa)). [4Fe-4S] cluster contacts are provided by C59, C63, and C66. Residues C103, C134, C194, and R266 each coordinate [2Fe-2S] cluster.

Belongs to the radical SAM superfamily. Biotin synthase family. Homodimer. It depends on [4Fe-4S] cluster as a cofactor. [2Fe-2S] cluster serves as cofactor.

It carries out the reaction (4R,5S)-dethiobiotin + (sulfur carrier)-SH + 2 reduced [2Fe-2S]-[ferredoxin] + 2 S-adenosyl-L-methionine = (sulfur carrier)-H + biotin + 2 5'-deoxyadenosine + 2 L-methionine + 2 oxidized [2Fe-2S]-[ferredoxin]. Its pathway is cofactor biosynthesis; biotin biosynthesis; biotin from 7,8-diaminononanoate: step 2/2. Catalyzes the conversion of dethiobiotin (DTB) to biotin by the insertion of a sulfur atom into dethiobiotin via a radical-based mechanism. The polypeptide is Biotin synthase (Pseudomonas putida (strain W619)).